A 280-amino-acid polypeptide reads, in one-letter code: Monoacylglycerol lipase (280 aa).

Ser111 functions as the Nucleophile in the catalytic mechanism. Catalysis depends on charge relay system residues Asp227 and His257.

This sequence belongs to the AB hydrolase superfamily.

It is found in the secreted. Its subcellular location is the cell wall. It catalyses the reaction Hydrolyzes glycerol monoesters of long-chain fatty acids.. Functionally, contributes to cell growth, probably by hydrolyzing exogenous lipids. Catalyzes the hydrolysis of monoacylglycerols (MAG) with fatty acid chains ranging from C14 to C18, with a maximum activity on monoolein. Is unable to hydrolyze long-chain diacylglycerol (DAG). This Mycolicibacterium smegmatis (strain ATCC 700084 / mc(2)155) (Mycobacterium smegmatis) protein is Monoacylglycerol lipase.